The primary structure comprises 168 residues: Mediator of RNA polymerase II transcription subunit 31 (168 aa).

Over residues 113-159 (EGEDQDVEESEEETVENEQKESEDEEDVVIVEKPEDEQEEQAEEAAE) the composition is skewed to acidic residues. The interval 113–168 (EGEDQDVEESEEETVENEQKESEDEEDVVIVEKPEDEQEEQAEEAAEPTDTSLLNT) is disordered.

It belongs to the Mediator complex subunit 31 family. In terms of assembly, component of the Mediator complex.

It is found in the nucleus. In terms of biological role, component of the Mediator complex, a coactivator involved in the regulated transcription of nearly all RNA polymerase II-dependent genes. Mediator functions as a bridge to convey information from gene-specific regulatory proteins to the basal RNA polymerase II transcription machinery. Mediator is recruited to promoters by direct interactions with regulatory proteins and serves as a scaffold for the assembly of a functional preinitiation complex with RNA polymerase II and the general transcription factors. The polypeptide is Mediator of RNA polymerase II transcription subunit 31 (mdt-31) (Caenorhabditis briggsae).